We begin with the raw amino-acid sequence, 541 residues long: MRMSDGAAPKANGSEASGQDLVPAAVEQAVPIQPVAGAALAAPAAGQINQIDPWIFQNFVQCPLGEFSISPRNTPGEILFDLALGPGLNPYLAHLSAMYTGWVGNMEVQLVLAGNAFTAGKVVVALVPPYFPKGSLTTAQITCFPHVMCDVRTLEPIQLPLLDVRRVLWHATQDQEESMRLVCMLYTPLRTNSPGDESFVVSGRLLSKPAADFNFVYLTPPIERTIYRMVDLPVIQPRLCTHARWPAPVYGLLVDPSLPSNPQWQNGRVHVDGTLLGTTPISGSWVSCFAAEAAYKFQSGTGEVATFTLIEQDGSAYVPGDRAAPLGYPDFSGQLEIEVQTETTKTGDKLKVTTFEMILGPTTNADQAPYQGRVFASVTAAASLDLVDGRVRAVPRSIYGFQDTIPEYNDGLLVPLAPPIGPFLPGEVLLRFRTYMRQIDTADAAAEAIDCALPQEFVSWFASNAFTVQSEALLLRYRNTLTGQLLFECKLYNEGYIALSYSGSGPLTFPTDGIFEVVSWVPRLYQLASVGSLATGRMLKQ.

Positions M1–R224 are shell domain. Residues T225–G277 are P1 sub-domain 1. Residues T225–Q541 are protruding domain. The tract at residues T278–L416 is P2 sub-domain. The segment at Q298–D366 is interaction with host receptor CD300LF. A P1 sub-domain 2 region spans residues A417–Q541.

It belongs to the caliciviridae capsid protein family. In terms of assembly, homodimer. Homomultimer. Interacts with the minor capsid protein VP2. Interacts (via P2 subdomain) with host receptor CD300LF (via N-terminus); this interaction requires Mg(2+) and Ca(2+), and allows viral binding and entry into the host cell. Stochioimetry is 2:2. Bile acids interact with the P domain dimer interface and act as cofactors enhancing virus binding and infectivity. Interacts with host receptor CD300LD; this interaction allows viral binding and entry into the host cell.

It localises to the virion. It is found in the host cytoplasm. In terms of biological role, capsid protein self assembles to form an icosahedral capsid with a T=3 symmetry, about 38 nm in diameter, and consisting of 180 capsid proteins. A smaller form of capsid with a diameter of 23 nm might be capsid proteins assembled as icosahedron with T=1 symmetry. The capsid encapsulates the genomic RNA and is decorated with VP2 proteins. Mediates virion attachment to the host cell receptor CD300LF. The polypeptide is Capsid protein VP1 (Norovirus (isolate Mouse/NoV/United States/MNV1/2002/GV) (MNV-1)).